Consider the following 298-residue polypeptide: UDP-N-acetylenolpyruvoylglucosamine reductase (298 aa).

The 180-residue stretch at 27–206 folds into the FAD-binding PCMH-type domain; it reads VGGPAQRLYR…QQQIRRLLRQ (180 aa). R171 is a catalytic residue. The Proton donor role is filled by S220. E290 is an active-site residue.

Belongs to the MurB family. It depends on FAD as a cofactor.

The protein localises to the cytoplasm. The catalysed reaction is UDP-N-acetyl-alpha-D-muramate + NADP(+) = UDP-N-acetyl-3-O-(1-carboxyvinyl)-alpha-D-glucosamine + NADPH + H(+). The protein operates within cell wall biogenesis; peptidoglycan biosynthesis. In terms of biological role, cell wall formation. In Nitrosococcus oceani (strain ATCC 19707 / BCRC 17464 / JCM 30415 / NCIMB 11848 / C-107), this protein is UDP-N-acetylenolpyruvoylglucosamine reductase.